The primary structure comprises 487 residues: Zinc finger and BTB domain-containing protein 32 (487 aa).

One can recognise a BTB domain in the interval 29-87; the sequence is CDTLITVGSQEFPAHSLVLAGVSQQLGRRGQWALGEGISPSTFAQLLNFVYGESVELQP. Basic and acidic residues predominate over residues 112 to 166; sequence ARGDRAKKPDPGLKKHQEEPEKPSRNPERELGDPGEKQKPEQVSRTGGREQEMLH. Disordered stretches follow at residues 112-244 and 308-371; these read ARGD…TSVT and QNQL…ARSR. Over residues 308-320 the composition is skewed to polar residues; sequence QNQLASSSPTPGS. Positions 357 to 369 are enriched in pro residues; sequence PPRPHPPPAPPAR. 3 C2H2-type zinc fingers span residues 373–395, 401–423, and 428–450; these read YACS…YRVH, FSCS…LRTH, and YRCS…MRGH. A disordered region spans residues 468-487; that stretch reads SSSRPSRPSTSPCCPSSSTT.

The protein belongs to the krueppel C2H2-type zinc-finger protein family. Homodimer (via PTB domain). Interacts with the N-terminal of FANCC. Interacts with ZBTB16. Interacts with GATA3. In terms of tissue distribution, predominantly expressed in testis. Some isoforms are ubiquitously expressed.

It localises to the nucleus. Its function is as follows. DNA-binding protein that binds to the to a 5'-TGTACAGTGT-3' core sequence. May function as a transcriptional transactivator and transcriptional repressor. Probably exerts its repressor effect by preventing GATA3 from binding to DNA. May play a role in regulating the differentiation and activation of helper T-cells. The polypeptide is Zinc finger and BTB domain-containing protein 32 (ZBTB32) (Homo sapiens (Human)).